The primary structure comprises 216 residues: Phosphatidylserine decarboxylase proenzyme (216 aa).

Catalysis depends on Ser-183, which acts as the Schiff-base intermediate with substrate; via pyruvic acid. The residue at position 183 (Ser-183) is a Pyruvic acid (Ser); by autocatalysis.

This sequence belongs to the phosphatidylserine decarboxylase family. PSD-A subfamily. As to quaternary structure, heterodimer of a large membrane-associated beta subunit and a small pyruvoyl-containing alpha subunit. The cofactor is pyruvate. Is synthesized initially as an inactive proenzyme. Formation of the active enzyme involves a self-maturation process in which the active site pyruvoyl group is generated from an internal serine residue via an autocatalytic post-translational modification. Two non-identical subunits are generated from the proenzyme in this reaction, and the pyruvate is formed at the N-terminus of the alpha chain, which is derived from the carboxyl end of the proenzyme. The post-translation cleavage follows an unusual pathway, termed non-hydrolytic serinolysis, in which the side chain hydroxyl group of the serine supplies its oxygen atom to form the C-terminus of the beta chain, while the remainder of the serine residue undergoes an oxidative deamination to produce ammonia and the pyruvoyl prosthetic group on the alpha chain.

The protein resides in the cell membrane. It carries out the reaction a 1,2-diacyl-sn-glycero-3-phospho-L-serine + H(+) = a 1,2-diacyl-sn-glycero-3-phosphoethanolamine + CO2. It functions in the pathway phospholipid metabolism; phosphatidylethanolamine biosynthesis; phosphatidylethanolamine from CDP-diacylglycerol: step 2/2. Functionally, catalyzes the formation of phosphatidylethanolamine (PtdEtn) from phosphatidylserine (PtdSer). This chain is Phosphatidylserine decarboxylase proenzyme, found in Chlorobaculum tepidum (strain ATCC 49652 / DSM 12025 / NBRC 103806 / TLS) (Chlorobium tepidum).